Reading from the N-terminus, the 455-residue chain is L-serine dehydratase (455 aa).

It belongs to the iron-sulfur dependent L-serine dehydratase family. [4Fe-4S] cluster serves as cofactor.

It catalyses the reaction L-serine = pyruvate + NH4(+). Its pathway is carbohydrate biosynthesis; gluconeogenesis. This chain is L-serine dehydratase (sdaA), found in Helicobacter pylori (strain J99 / ATCC 700824) (Campylobacter pylori J99).